We begin with the raw amino-acid sequence, 1053 residues long: Sal-like protein 4 (1053 aa).

The tract at residues 1–62 is disordered; that stretch reads MSRRKQAKPQ…DEVASEDEAT (62 aa). The segment covering 20-46 has biased composition (low complexity); that stretch reads EQQPQQQTPEFADAAPAAPAAGELGAP. Ser-57 is subject to Phosphoserine. The C2H2-type 1; atypical zinc-finger motif lies at 72–94; that stretch reads HVCEKCCAEFFSISEFLEHKKNC. Residues 116-149 form a disordered region; the sequence is SGAVLSHQPTSPGSKDCHRENGGSSEDMKEKPDA. The segment covering 130–149 has biased composition (basic and acidic residues); sequence KDCHRENGGSSEDMKEKPDA. Residue Lys-156 forms a Glycyl lysine isopeptide (Lys-Gly) (interchain with G-Cter in SUMO1); alternate linkage. Lys-156 is covalently cross-linked (Glycyl lysine isopeptide (Lys-Gly) (interchain with G-Cter in SUMO2); alternate). Residues Lys-175, Lys-190, and Lys-290 each participate in a glycyl lysine isopeptide (Lys-Gly) (interchain with G-Cter in SUMO2) cross-link. Ser-307 carries the post-translational modification Phosphoserine. A Glycyl lysine isopeptide (Lys-Gly) (interchain with G-Cter in SUMO1); alternate cross-link involves residue Lys-316. Lys-316 participates in a covalent cross-link: Glycyl lysine isopeptide (Lys-Gly) (interchain with G-Cter in SUMO2); alternate. A Glycyl lysine isopeptide (Lys-Gly) (interchain with G-Cter in SUMO2) cross-link involves residue Lys-372. Lys-374 is covalently cross-linked (Glycyl lysine isopeptide (Lys-Gly) (interchain with G-Cter in SUMO1); alternate). A Glycyl lysine isopeptide (Lys-Gly) (interchain with G-Cter in SUMO2); alternate cross-link involves residue Lys-374. 2 C2H2-type zinc fingers span residues 382–404 and 410–432; these read HKCKYCSKVFGTDSSLQIHLRSH and FVCSVCGHRFTTKGNLKVHFHRH. Lys-436 participates in a covalent cross-link: Glycyl lysine isopeptide (Lys-Gly) (interchain with G-Cter in SUMO2). Over residues 483 to 496 the composition is skewed to polar residues; the sequence is VGLPQNLSSGTNPK. The segment at 483-546 is disordered; that stretch reads VGLPQNLSSG…QGSGTPEPGS (64 aa). Thr-541 is modified (phosphothreonine). Lys-550 is covalently cross-linked (Glycyl lysine isopeptide (Lys-Gly) (interchain with G-Cter in SUMO2)). C2H2-type zinc fingers lie at residues 566–588 and 594–616; these read NECLICHRVLSCQSSLKMHYRTH and FQCKICGRAFSTKGNLKTHLGVH. Residues Lys-597 and Lys-623 each participate in a glycyl lysine isopeptide (Lys-Gly) (interchain with G-Cter in SUMO2) cross-link. Residues 626–648 form a C2H2-type 6 zinc finger; sequence HSCPICQKKFTNAVMLQQHIRMH. Disordered regions lie at residues 694-714, 736-776, and 788-828; these read EEVSSQEAPSSSSKVPTPLPS, VGPA…QSRS, and LSPA…LPST. Positions 698–708 are enriched in low complexity; that stretch reads SQEAPSSSSKV. Polar residues-rich tracts occupy residues 743–776 and 788–797; these read LQRQGSRENGSVESDGLTNDSSSLMGDQEYQSRS and LSPANSQAES. Phosphoserine occurs at positions 776 and 789. Positions 810-821 are enriched in basic and acidic residues; that stretch reads ESSENSRTEMEG. Lys-838 is covalently cross-linked (Glycyl lysine isopeptide (Lys-Gly) (interchain with G-Cter in SUMO1); alternate). Lys-838 is covalently cross-linked (Glycyl lysine isopeptide (Lys-Gly) (interchain with G-Cter in SUMO2); alternate). The residue at position 852 (Ser-852) is a Phosphoserine. The C2H2-type 7 zinc-finger motif lies at 870 to 892; the sequence is HGCTRCGKNFSSASALQIHERTH. Lys-896 is covalently cross-linked (Glycyl lysine isopeptide (Lys-Gly) (interchain with G-Cter in SUMO2)). The C2H2-type 8 zinc-finger motif lies at 898–920; that stretch reads FVCNICGRAFTTKGNLKVHYMTH. Residues Lys-932 and Lys-947 each participate in a glycyl lysine isopeptide (Lys-Gly) (interchain with G-Cter in SUMO2) cross-link. Positions 1018–1039 are disordered; sequence GSQSGISADVEKPSATDGVPKH. Ser-1019 carries the post-translational modification Phosphoserine.

This sequence belongs to the sal C2H2-type zinc-finger protein family. Interacts with POU5F1/OCT4. Interacts with NANOG. Interacts with BEND3. Interacts with NSD2 (via PHD-type zinc fingers 1, 2 and 3). Interacts with NRBP1. Post-translationally, isoform SALL4B exists primarily as a ubiquitinated form. In terms of processing, sumoylation with both SUMO1 and SUMO2 regulates the stability, subcellular localization, transcriptional activity, and may reduce interaction with POU5F1/OCT4. In terms of tissue distribution, expressed in testis. Constitutively expressed in acute myeloid leukemia (AML).

It localises to the cytoplasm. The protein localises to the nucleus. Transcription factor with a key role in the maintenance and self-renewal of embryonic and hematopoietic stem cells. In Homo sapiens (Human), this protein is Sal-like protein 4 (SALL4).